We begin with the raw amino-acid sequence, 161 residues long: uncharacterized protein (161 aa).

Interacts with ribosomes.

This is an uncharacterized protein from Saccharomyces cerevisiae (strain ATCC 204508 / S288c) (Baker's yeast).